The sequence spans 188 residues: D-glycero-beta-D-manno-heptose-1,7-bisphosphate 7-phosphatase (188 aa).

D11 acts as the Nucleophile in catalysis. 2 residues coordinate Mg(2+): D11 and D13. Substrate-binding positions include 11-13 (DRD), 19-22 (DHGY), and 53-56 (TNQS). The active-site Proton donor is the D13. Zn(2+)-binding residues include C92, H94, C107, and C109. 110–111 (RK) is a substrate binding site. Mg(2+) is bound by residues D136 and K137. K137 serves as a coordination point for substrate.

Belongs to the GmhB family. Monomer. It depends on Mg(2+) as a cofactor. Requires Zn(2+) as cofactor.

It is found in the cytoplasm. The catalysed reaction is D-glycero-beta-D-manno-heptose 1,7-bisphosphate + H2O = D-glycero-beta-D-manno-heptose 1-phosphate + phosphate. It functions in the pathway nucleotide-sugar biosynthesis; ADP-L-glycero-beta-D-manno-heptose biosynthesis; ADP-L-glycero-beta-D-manno-heptose from D-glycero-beta-D-manno-heptose 7-phosphate: step 2/4. It participates in bacterial outer membrane biogenesis; LPS core biosynthesis. Functionally, converts the D-glycero-beta-D-manno-heptose 1,7-bisphosphate intermediate into D-glycero-beta-D-manno-heptose 1-phosphate by removing the phosphate group at the C-7 position in vitro. Also catalyzes the dephosphorylation of D-glycero-alpha-D-manno-heptose 1,7-bisphosphate and 2-deoxy-D-manno-2-octoulosonate-8-phosphate in vitro. The chain is D-glycero-beta-D-manno-heptose-1,7-bisphosphate 7-phosphatase (gmhB) from Salmonella typhi.